The sequence spans 968 residues: MATPSMMPQWSYMHISGQDASEYLSPGLVQFARATETYFSLNNKFRNPTVAPTHDVTTDRSQRLTLRFIPVDREDTAYSYKARFTLAVGDNRVLDMASTYFDIRGVLDRGPTFKPYSGTAYNALAPKGAPNSCEWEQTEDSGRAVAEDEEEEDEDEEEEEEEQNARDQATKKTHVYAQAPLSGETITKSGLQIGSDNAETQAKPVYADPSYQPEPQIGESQWNEADANAAGGRVLKKTTPMKPCYGSYARPTNPFGGQSVLVPDEKGVPLPKVDLQFFSNTTSLNDRQGNATKPKVVLYSEDVNMETPDTHLSYKPGKGDENSKAMLGQQSMPNRPNYIAFRDNFIGLMYYNSTGNMGVLAGQASQLNAVVDLQDRNTELSYQLLLDSIGDRTRYFSMWNQAVDSYDPDVRIIENHGTEDELPNYCFPLGGIGVTDTYQAIKANGNGSGDNGDTTWTKDETFATRNEIGVGNNFAMEINLNANLWRNFLYSNIALYLPDKLKYNPTNVEISDNPNTYDYMNKRVVAPGLVDCYINLGARWSLDYMDNVNPFNHHRNAGLRYRSMLLGNGRYVPFHIQVPQKFFAIKNLLLLPGSYTYEWNFRKDVNMVLQSSLGNDLRVDGASIKFDSICLYATFFPMAHNTASTLEAMLRNDTNDQSFNDYLSAANMLYPIPANATNVPISIPSRNWAAFRGWAFTRLKTKETPSLGSGYDPYYTYSGSIPYLDGTFYLNHTFKKVAITFDSSVSWPGNDRLLTPNEFEIKRSVDGEGYNVAQCNMTKDWFLVQMLANYNIGYQGFYIPESYKDRMYSFFRNFQPMSRQVVDDTKYKEYQQVGILHQHNNSGFVGYLAPTMREGQAYPANVPYPLIGKTAVDSITQKKFLCDRTLWRIPFSSNFMSMGALTDLGQNLLYANSAHALDMTFEVDPMDEPTLLYVLFEVFDVVRVHQPHRGVIETVYLRTPFSAGNATT.

Residue Ala2 is modified to N-acetylalanine; by host. A disordered region spans residues Ala125–Lys188. Residues Glu147–Glu162 are compositionally biased toward acidic residues. 2 positions are modified to phosphoserine; by host: Ser182 and Ser283. Residue Tyr956 is modified to Phosphotyrosine; by host.

The protein belongs to the adenoviridae hexon protein family. As to quaternary structure, homotrimer. Interacts with the capsid vertex protein; this interaction binds the peripentonal hexons to the neighboring penton base. Interacts with the hexon-linking protein; this interaction tethers the hexons surrounding the penton to those situated in the central plate of the facet. Interacts with the hexon-interlacing protein; this interaction lashes the hexons together. Interacts with pre-protein VI; this interaction probably allows nuclear import of hexon trimers and possibly pre-capsid assembly. Interacts with host dyneins DYNC1LI1 and DYNC1I2; this interaction might be involved in intracellular microtubule-dependent transport of incoming viral capsid. Interacts with the shutoff protein; this interaction allows folding and formation of hexons trimers. Interacts with host NUP214 (via N-terminus); this interaction might be essential for the release of the virus genome to the nucleus.

The protein localises to the virion. Its subcellular location is the host nucleus. Major capsid protein that self-associates to form 240 hexon trimers, each in the shape of a hexagon, building most of the pseudo T=25 capsid. Assembled into trimeric units with the help of the chaperone shutoff protein. Transported by pre-protein VI to the nucleus where it associates with other structural proteins to form an empty capsid. Might be involved, through its interaction with host dyneins, in the intracellular microtubule-dependent transport of incoming viral capsid to the nucleus. The sequence is that of Hexon protein from Homo sapiens (Human).